We begin with the raw amino-acid sequence, 308 residues long: RING-H2 finger protein ATL63 (308 aa).

Residues 29 to 49 form a helical membrane-spanning segment; sequence VLLAALVFLLLVVLFVLLLHF. Residues 138–180 form an RING-type; atypical zinc finger; the sequence is CVICLGLWEAGDFGRKLRNCGHGFHVECIDMWLSSHSTCPLCR. The disordered stretch occupies residues 252 to 308; sequence VFDDDEEINDGGTRSDRRRSMSMTSSASSSLMRMLSSSSSRSERNKVFPTARQDSSK. Over residues 272–291 the composition is skewed to low complexity; the sequence is MSMTSSASSSLMRMLSSSSS.

The protein belongs to the RING-type zinc finger family. ATL subfamily.

The protein localises to the membrane. The enzyme catalyses S-ubiquitinyl-[E2 ubiquitin-conjugating enzyme]-L-cysteine + [acceptor protein]-L-lysine = [E2 ubiquitin-conjugating enzyme]-L-cysteine + N(6)-ubiquitinyl-[acceptor protein]-L-lysine.. It functions in the pathway protein modification; protein ubiquitination. This is RING-H2 finger protein ATL63 (ATL63) from Arabidopsis thaliana (Mouse-ear cress).